Here is a 260-residue protein sequence, read N- to C-terminus: Archaerhodopsin-1 (260 aa).

The propeptide occupies 1–6; that stretch reads MDPIAL. Over 7–20 the chain is Extracellular; sequence TAAVGADLLGDGRP. The chain crosses the membrane as a helical span at residues 21-42; it reads ETLWLGIGTLLMLIGTFYFIVK. The Cytoplasmic segment spans residues 43-51; sequence GWGVTDKEA. Residues 52-73 form a helical membrane-spanning segment; the sequence is REYYSITILVPGIASAAYLSMF. Topologically, residues 74 to 91 are extracellular; sequence FGIGLTEVQVGSEMLDIY. A helical transmembrane segment spans residues 92 to 113; sequence YARYADWLFTTPLLLLDLALLA. At 114–116 the chain is on the cytoplasmic side; it reads KVD. Residues 117–139 traverse the membrane as a helical segment; that stretch reads RVSIGTLVGVDALMIVTGLVGAL. Residues 140-143 lie on the Extracellular side of the membrane; that stretch reads SHTP. The chain crosses the membrane as a helical span at residues 144 to 172; that stretch reads LARYTWWLFSTICMIVVLYFLATSLRAAA. The Cytoplasmic segment spans residues 173-176; sequence KERG. The helical transmembrane segment at 177-204 threads the bilayer; that stretch reads PEVASTFNTLTALVLVLWTAYPILWIIG. The Extracellular portion of the chain corresponds to 205 to 212; sequence TEGAGVVG. The chain crosses the membrane as a helical span at residues 213–245; it reads LGIETLLFMVLDVTAKVGFGFILLRSRAILGDT. The residue at position 228 (Lys228) is an N6-(retinylidene)lysine. Residues 246–260 lie on the Cytoplasmic side of the membrane; the sequence is EAPEPSAGAEASAAD.

It belongs to the archaeal/bacterial/fungal opsin family.

It localises to the cell membrane. In terms of biological role, light-driven proton pump. It may interact with bacterioruberin in the claret membrane. The polypeptide is Archaerhodopsin-1 (Halorubrum ezzemoulense (Halorubrum chaoviator)).